The chain runs to 429 residues: 4-hydroxy-3-methylbut-2-en-1-yl diphosphate synthase (flavodoxin) (429 aa).

The [4Fe-4S] cluster site is built by C317, C320, C363, and E370.

The protein belongs to the IspG family. It depends on [4Fe-4S] cluster as a cofactor.

The enzyme catalyses (2E)-4-hydroxy-3-methylbut-2-enyl diphosphate + oxidized [flavodoxin] + H2O + 2 H(+) = 2-C-methyl-D-erythritol 2,4-cyclic diphosphate + reduced [flavodoxin]. The protein operates within isoprenoid biosynthesis; isopentenyl diphosphate biosynthesis via DXP pathway; isopentenyl diphosphate from 1-deoxy-D-xylulose 5-phosphate: step 5/6. Functionally, converts 2C-methyl-D-erythritol 2,4-cyclodiphosphate (ME-2,4cPP) into 1-hydroxy-2-methyl-2-(E)-butenyl 4-diphosphate. The sequence is that of 4-hydroxy-3-methylbut-2-en-1-yl diphosphate synthase (flavodoxin) from Deinococcus radiodurans (strain ATCC 13939 / DSM 20539 / JCM 16871 / CCUG 27074 / LMG 4051 / NBRC 15346 / NCIMB 9279 / VKM B-1422 / R1).